The chain runs to 96 residues: Prokineticin Bm8-e (96 aa).

Residues 1–19 (MKCFAQIVVLLLVIAFSHG) form the signal peptide. 5 cysteine pairs are disulfide-bonded: Cys-26-Cys-38, Cys-32-Cys-50, Cys-37-Cys-78, Cys-60-Cys-86, and Cys-80-Cys-95.

This sequence belongs to the AVIT (prokineticin) family. In terms of tissue distribution, expressed by the skin glands.

It is found in the secreted. Functionally, potent agonist for both PKR1/PROKR1 and PKR2/PROKR2, and inducer of a potent and long-lasting hyperalgesia. Also potentiates capsaicin-induced TRPV1 current, when tested on DRG neurons. At subnanomolar concentrations, this protein both induces potent chemotaxis of macrophages and stimulates LPS-induced production of the pro-inflammatory cytokines IL-1 and IL-12. In vivo, potently stimulates the contraction of the guinea-pig gastrointestinal (GI) smooth muscle (nanomolar concentration). This is Prokineticin Bm8-e from Bombina maxima (Giant fire-bellied toad).